The primary structure comprises 283 residues: Chromatin modification-related protein png1 (283 aa).

Residues 137-171 (YSPSGASSARQTPAPSRSGASTAGRRRTSATTRGA) show a composition bias toward low complexity. Residues 137–224 (YSPSGASSAR…NEMVSEEDME (88 aa)) form a disordered region. Positions 181–216 (YTASLADSGSTRGQKVSNATATTQLETKADSTTPNE) are enriched in polar residues. Residues 228–277 (EKYCFCQQGSYGQMVACDNANCEREWFHMECVGLKAPPEGTWYCEACRDQ) form a PHD-type zinc finger. The Zn(2+) site is built by Cys231, Cys233, Cys244, Cys249, His255, Cys258, Cys271, and Cys274.

Belongs to the ING family. Interacts with H3K4me3 and to a lesser extent with H3K4me2. Component of a histone deacetylase complex.

The protein localises to the nucleus. Functionally, component of a histone deacetylase complex responsible for the deacetylation of lysine residues on the N-terminal part of the core histones (H2A, H2B, H3 and H4). Histone deacetylation gives a tag for epigenetic repression and plays an important role in transcriptional regulation, cell cycle progression and developmental events. Has a role in silencing of mating type genes. The sequence is that of Chromatin modification-related protein png1 (png1) from Schizosaccharomyces pombe (strain 972 / ATCC 24843) (Fission yeast).